The primary structure comprises 153 residues: UPF0756 membrane protein NT01CX_1209 (153 aa).

Helical transmembrane passes span 5–25 (IILLILMFLSFISKNKSLGIA), 45–65 (ENHFMNLGMTFLMIWMLIPII), 83–103 (IVCFLCGAIVAVLASKGVGFL), and 113–133 (IILGSIVGVSLLGGVPVGPLI).

This sequence belongs to the UPF0756 family.

The protein localises to the cell membrane. This Clostridium novyi (strain NT) protein is UPF0756 membrane protein NT01CX_1209.